We begin with the raw amino-acid sequence, 245 residues long: Myozenin-3 (245 aa).

A Phosphoserine modification is found at Ser31. The tract at residues 50-67 is binding to ACTN2, PPP3CA and TCAP; it reads LLFQKRQRRVQKFTFELS. A binding to FLNC region spans residues 67–108; sequence SESLQAILASSARGKVAGRAAQATVPNGLEEQNHHSETHVFQ. The disordered stretch occupies residues 93–134; that stretch reads NGLEEQNHHSETHVFQGSPGDPGITHLGAAGTGSVRSPSALA. Positions 180–201 are binding to ACTN2; that stretch reads PIPRDYRNFNKTPVPFGGPHVR.

It belongs to the myozenin family. As to quaternary structure, interacts with ACTN2, LDB3, FLNC, PPP3CA and TCAP. Expressed specifically in skeletal muscle and is enriched in fast-twitch muscle fibers. Not detected in heart.

The protein localises to the cytoplasm. It localises to the myofibril. Its subcellular location is the sarcomere. It is found in the z line. Myozenins may serve as intracellular binding proteins involved in linking Z line proteins such as alpha-actinin, gamma-filamin, TCAP/telethonin, LDB3/ZASP and localizing calcineurin signaling to the sarcomere. Plays an important role in the modulation of calcineurin signaling. May play a role in myofibrillogenesis. The polypeptide is Myozenin-3 (Mus musculus (Mouse)).